A 761-amino-acid polypeptide reads, in one-letter code: Complement factor B (761 aa).

A signal peptide spans 1 to 22 (MESPQLCLVLLVLGFSSGGVSA). Sushi domains are found at residues 32-97 (VSCS…ECRA), 98-157 (IRCP…ICDD), and 160-217 (GYCP…SCQD). Intrachain disulfides connect Cys34/Cys73, Cys59/Cys95, Cys100/Cys142, Cys128/Cys155, Cys162/Cys202, and Cys188/Cys215. Residues Asn119 and Asn139 are each glycosylated (N-linked (GlcNAc...) asparagine). Residues 267-466 (NIYLVLDGSD…DLENVFYQMI (200 aa)) form the VWFA domain. The Mg(2+) site is built by Ser275 and Ser277. Asn282 is a glycosylation site (N-linked (GlcNAc...) asparagine). Thr350 contacts Mg(2+). Asn375 carries N-linked (GlcNAc...) asparagine glycosylation. A Peptidase S1 domain is found at 474–754 (LCGMVWEHKK…VLPWLKDKLK (281 aa)). 5 cysteine pairs are disulfide-bonded: Cys475–Cys593, Cys508–Cys524, Cys596–Cys612, Cys653–Cys679, and Cys692–Cys722. Active-site charge relay system residues include His523 and Asp573. The Charge relay system role is filled by Ser696.

This sequence belongs to the peptidase S1 family. As to quaternary structure, monomer. Interacts with complement C3b; this interaction is dependent on the presence of Mg(2+). In terms of assembly, catalytic component of the C3 convertase of the alternative complement pathway, also named C3bBb, composed of complement factor B Bb and complement C3b. Catalytic component of the C5 convertase of the alternative complement pathway, also named C3bBb3b, composed of complement factor B Bb and additional molecules of complement C3b. Interacts to CFP; this interaction contributes to the stabilization of the active C3-convertase enzyme complex. The cofactor is Mg(2+). Mn(2+) is required as a cofactor. Post-translationally, cleaved by CFD following activation of the alternative complement system, generating Ba and Bb chains. Cleavage and activation takes place when CFB is already associated with complement C3b.

It is found in the secreted. The protein resides in the cell surface. It carries out the reaction Cleavage of Arg-|-Ser bond in complement component C3 alpha-chain to yield C3a and C3b, and Arg-|-Xaa bond in complement component C5 alpha-chain to yield C5a and C5b.. Precursor of the catalytic component of the C3 and C5 convertase complexes of the alternative pathway of the complement system, a cascade of proteins that leads to phagocytosis and breakdown of pathogens and signaling that strengthens the adaptive immune system. The alternative complement pathway acts as an amplification loop that enhances other complement pathways (classical, lectin and GZMK) by promoting formation of additional C3 and C5 convertases. CFB is cleaved and activated by CFD to generate Ba and Bb chains; Bb chain constituting the catalytic component of the C3 and C5 convertases. Its function is as follows. Serine protease component of the complement C3 and C5 convertase complexes of the alternative complement pathway. Following cleavage and activation by factor D (CFD), forms the C3 convertase together with complement C3b. As part of the C3 convertase, cleaves and activates C3 into C3a anaphylatoxin and C3b opsonin, the next components of the complement pathways. When an additional complement C3b molecule binds to the C3 convertase, forms the C5 convertase, which cleaves and activates C5 into C5a anaphylatoxin and C5b component of the membrane attack complex. In terms of biological role, involved in proliferation and differentiation of preactivated B-lymphocytes, rapid spreading of peripheral blood monocytes, stimulation of lymphocyte blastogenesis and lysis of erythrocytes. The sequence is that of Complement factor B (Cfb) from Mus musculus (Mouse).